The following is a 520-amino-acid chain: Probable protein phosphatase 2C 39 (520 aa).

The PPM-type phosphatase domain occupies Phe-160 to Leu-507. The Mn(2+) site is built by Asp-195, Gly-196, Asp-435, and Asp-498.

It belongs to the PP2C family. Mg(2+) is required as a cofactor. Requires Mn(2+) as cofactor.

The catalysed reaction is O-phospho-L-seryl-[protein] + H2O = L-seryl-[protein] + phosphate. It carries out the reaction O-phospho-L-threonyl-[protein] + H2O = L-threonyl-[protein] + phosphate. This Oryza sativa subsp. japonica (Rice) protein is Probable protein phosphatase 2C 39.